Reading from the N-terminus, the 210-residue chain is Cell wall protein SRL1 (210 aa).

Residues 1 to 19 form the signal peptide; it reads MLQSVVFFALLTFASSVSA. The N-linked (GlcNAc...) asparagine glycan is linked to asparagine 23. Disordered stretches follow at residues 80-99 and 118-142; these read SLST…HEIT and LSPS…VKSF. Over residues 118–127 the composition is skewed to low complexity; the sequence is LSPSSTAASV. Residues 132–141 show a composition bias toward basic and acidic residues; it reads SNNKDAKVKS. N-linked (GlcNAc...) asparagine glycans are attached at residues asparagine 174, asparagine 200, and asparagine 206.

It is found in the secreted. The protein localises to the cell wall. Its subcellular location is the cell surface. Its function is as follows. Required to stabilize the cell wall in the absence of multiple GPI-anchored mannoproteins. This chain is Cell wall protein SRL1 (SRL1), found in Saccharomyces cerevisiae (strain ATCC 204508 / S288c) (Baker's yeast).